Reading from the N-terminus, the 449-residue chain is Integrator complex subunit 15 (449 aa).

Belongs to the Integrator subunit 15 family. In terms of assembly, component of the Integrator complex, composed of core subunits INTS1, INTS2, INTS3, INTS4, INTS5, INTS6, INTS7, INTS8, INTS9/RC74, INTS10, INTS11/CPSF3L, INTS12, INTS13, INTS14 and INTS15. The core complex associates with protein phosphatase 2A subunits PPP2CA and PPP2R1A, to form the Integrator-PP2A (INTAC) complex. INTS15 is part of the tail subcomplex, composed of INTS10, INTS13, INTS14 and INTS15.

It localises to the nucleus. It is found in the chromosome. Its function is as follows. Component of the integrator complex, a multiprotein complex that terminates RNA polymerase II (Pol II) transcription in the promoter-proximal region of genes. The integrator complex provides a quality checkpoint during transcription elongation by driving premature transcription termination of transcripts that are unfavorably configured for transcriptional elongation: the complex terminates transcription by (1) catalyzing dephosphorylation of the C-terminal domain (CTD) of Pol II subunit POLR2A/RPB1 and SUPT5H/SPT5, (2) degrading the exiting nascent RNA transcript via endonuclease activity and (3) promoting the release of Pol II from bound DNA. The integrator complex is also involved in terminating the synthesis of non-coding Pol II transcripts, such as enhancer RNAs (eRNAs), small nuclear RNAs (snRNAs), telomerase RNAs and long non-coding RNAs (lncRNAs). INTS15 is part of the integrator tail module that acts as a platform for the recruitment of transcription factors at promoters. Within the integrator complex, INTS15 is required to bridge different integrator modules. The polypeptide is Integrator complex subunit 15 (Homo sapiens (Human)).